Consider the following 373-residue polypeptide: tRNA 2-selenouridine synthase (373 aa).

In terms of domain architecture, Rhodanese spans Phe12–Glu136. Cys95 serves as the catalytic S-selanylcysteine intermediate.

This sequence belongs to the SelU family. Monomer.

The catalysed reaction is 5-methylaminomethyl-2-thiouridine(34) in tRNA + selenophosphate + (2E)-geranyl diphosphate + H2O + H(+) = 5-methylaminomethyl-2-selenouridine(34) in tRNA + (2E)-thiogeraniol + phosphate + diphosphate. It catalyses the reaction 5-methylaminomethyl-2-thiouridine(34) in tRNA + (2E)-geranyl diphosphate = 5-methylaminomethyl-S-(2E)-geranyl-thiouridine(34) in tRNA + diphosphate. It carries out the reaction 5-methylaminomethyl-S-(2E)-geranyl-thiouridine(34) in tRNA + selenophosphate + H(+) = 5-methylaminomethyl-2-(Se-phospho)selenouridine(34) in tRNA + (2E)-thiogeraniol. The enzyme catalyses 5-methylaminomethyl-2-(Se-phospho)selenouridine(34) in tRNA + H2O = 5-methylaminomethyl-2-selenouridine(34) in tRNA + phosphate. In terms of biological role, involved in the post-transcriptional modification of the uridine at the wobble position (U34) of tRNA(Lys), tRNA(Glu) and tRNA(Gln). Catalyzes the conversion of 2-thiouridine (S2U-RNA) to 2-selenouridine (Se2U-RNA). Acts in a two-step process involving geranylation of 2-thiouridine (S2U) to S-geranyl-2-thiouridine (geS2U) and subsequent selenation of the latter derivative to 2-selenouridine (Se2U) in the tRNA chain. This chain is tRNA 2-selenouridine synthase, found in Ectopseudomonas mendocina (strain ymp) (Pseudomonas mendocina).